Here is a 456-residue protein sequence, read N- to C-terminus: Bifunctional protein GlmU (456 aa).

Positions 1 to 228 are pyrophosphorylase; sequence MPQNTLNTVI…SHLAAGVNNK (228 aa). UDP-N-acetyl-alpha-D-glucosamine is bound by residues 11 to 14, lysine 25, glutamine 75, 80 to 81, 102 to 104, glycine 138, glutamate 153, asparagine 168, and asparagine 226; these read LAAG, GT, and YGD. Aspartate 104 serves as a coordination point for Mg(2+). Asparagine 226 is a binding site for Mg(2+). Residues 229–249 are linker; the sequence is RQLAELERIFQTEQAQELLKA. The segment at 250-456 is N-acetyltransferase; sequence GVTLRDPARF…GWMRPEKDKQ (207 aa). UDP-N-acetyl-alpha-D-glucosamine-binding residues include arginine 332 and lysine 350. The Proton acceptor role is filled by histidine 362. The UDP-N-acetyl-alpha-D-glucosamine site is built by tyrosine 365 and asparagine 376. Acetyl-CoA-binding positions include alanine 379, 385–386, serine 404, alanine 422, and arginine 439; that span reads NY.

It in the N-terminal section; belongs to the N-acetylglucosamine-1-phosphate uridyltransferase family. This sequence in the C-terminal section; belongs to the transferase hexapeptide repeat family. Homotrimer. Requires Mg(2+) as cofactor.

The protein localises to the cytoplasm. It carries out the reaction alpha-D-glucosamine 1-phosphate + acetyl-CoA = N-acetyl-alpha-D-glucosamine 1-phosphate + CoA + H(+). The enzyme catalyses N-acetyl-alpha-D-glucosamine 1-phosphate + UTP + H(+) = UDP-N-acetyl-alpha-D-glucosamine + diphosphate. Its pathway is nucleotide-sugar biosynthesis; UDP-N-acetyl-alpha-D-glucosamine biosynthesis; N-acetyl-alpha-D-glucosamine 1-phosphate from alpha-D-glucosamine 6-phosphate (route II): step 2/2. The protein operates within nucleotide-sugar biosynthesis; UDP-N-acetyl-alpha-D-glucosamine biosynthesis; UDP-N-acetyl-alpha-D-glucosamine from N-acetyl-alpha-D-glucosamine 1-phosphate: step 1/1. It functions in the pathway bacterial outer membrane biogenesis; LPS lipid A biosynthesis. Its function is as follows. Catalyzes the last two sequential reactions in the de novo biosynthetic pathway for UDP-N-acetylglucosamine (UDP-GlcNAc). The C-terminal domain catalyzes the transfer of acetyl group from acetyl coenzyme A to glucosamine-1-phosphate (GlcN-1-P) to produce N-acetylglucosamine-1-phosphate (GlcNAc-1-P), which is converted into UDP-GlcNAc by the transfer of uridine 5-monophosphate (from uridine 5-triphosphate), a reaction catalyzed by the N-terminal domain. This is Bifunctional protein GlmU from Neisseria gonorrhoeae (strain ATCC 700825 / FA 1090).